The following is a 356-amino-acid chain: tRNA N6-adenosine threonylcarbamoyltransferase (356 aa).

Fe cation contacts are provided by H115 and H119. Substrate-binding positions include 138 to 142 (LVSGG), D171, G184, and N283. D311 lines the Fe cation pocket.

It belongs to the KAE1 / TsaD family. Requires Fe(2+) as cofactor.

It localises to the cytoplasm. It catalyses the reaction L-threonylcarbamoyladenylate + adenosine(37) in tRNA = N(6)-L-threonylcarbamoyladenosine(37) in tRNA + AMP + H(+). In terms of biological role, required for the formation of a threonylcarbamoyl group on adenosine at position 37 (t(6)A37) in tRNAs that read codons beginning with adenine. Is involved in the transfer of the threonylcarbamoyl moiety of threonylcarbamoyl-AMP (TC-AMP) to the N6 group of A37, together with TsaE and TsaB. TsaD likely plays a direct catalytic role in this reaction. This Prochlorococcus marinus (strain AS9601) protein is tRNA N6-adenosine threonylcarbamoyltransferase.